We begin with the raw amino-acid sequence, 162 residues long: Peroxiredoxin-2 (162 aa).

The Thioredoxin domain maps to 4–162 (IAVGDVLPDG…SSADDILKDL (159 aa)). C51 serves as the catalytic Cysteine sulfenic acid (-SOH) intermediate.

Belongs to the peroxiredoxin family. Prx5 subfamily. As to quaternary structure, monomer. Homodimer. Glutathionylation of C(P) causes the dimer to dissociate. Subsequent reduction of the mixed disulfide bond leads again to dimerization.

It catalyses the reaction [glutaredoxin]-dithiol + a hydroperoxide = [glutaredoxin]-disulfide + an alcohol + H2O. In terms of biological role, thiol-specific peroxidase that catalyzes the reduction of hydrogen peroxide and organic hydroperoxides to water and alcohols, respectively. Can reduce H(2)O(2) and short chain organic, fatty acid, and phospholipid hydroperoxides. Plays a role in cell protection against oxidative stress by detoxifying peroxides. This Populus trichocarpa (Western balsam poplar) protein is Peroxiredoxin-2.